Here is a 132-residue protein sequence, read N- to C-terminus: MIMPLINGLKITLKHMFMKPVTLQYPDERPTPSPNFRGLHALKVSHDKAKCVACYLCPTVCPAKCITVEAGEDATHDKYAERYEIDMLRCIFCGYCVEACPVDALKMTGQFELANYKREDFIFVKERLLEKK.

2 4Fe-4S ferredoxin-type domains span residues 42-71 and 81-110; these read LKVSHDKAKCVACYLCPTVCPAKCITVEAG and ERYEIDMLRCIFCGYCVEACPVDALKMTGQ. Residues cysteine 51, cysteine 54, cysteine 57, cysteine 61, cysteine 90, cysteine 93, cysteine 96, and cysteine 100 each contribute to the [4Fe-4S] cluster site.

This sequence belongs to the complex I 23 kDa subunit family. NDH-1 is composed of 14 different subunits. Subunits NuoA, H, J, K, L, M, N constitute the membrane sector of the complex. It depends on [4Fe-4S] cluster as a cofactor.

The protein resides in the cell inner membrane. The enzyme catalyses a quinone + NADH + 5 H(+)(in) = a quinol + NAD(+) + 4 H(+)(out). In terms of biological role, NDH-1 shuttles electrons from NADH, via FMN and iron-sulfur (Fe-S) centers, to quinones in the respiratory chain. The immediate electron acceptor for the enzyme in this species is believed to be ubiquinone. Couples the redox reaction to proton translocation (for every two electrons transferred, four hydrogen ions are translocated across the cytoplasmic membrane), and thus conserves the redox energy in a proton gradient. The protein is NADH-quinone oxidoreductase subunit I 1 of Geobacter sulfurreducens (strain ATCC 51573 / DSM 12127 / PCA).